Reading from the N-terminus, the 956-residue chain is Translation initiation factor IF-2 (956 aa).

3 disordered regions span residues 53–102 (QFAG…QQEI), 116–315 (GKID…NRPA), and 334–371 (TLEKLQGKGGKSKAAKYRRDKRETHRQKSDDEQRALDE). Over residues 58-102 (KGNKEASKEVGEEKRKEKEALRVEREKEIEDKRRQEEERQKQQEI) the composition is skewed to basic and acidic residues. The span at 142-158 (VTPTQTEKPVQKETVQS) shows a compositional bias: polar residues. Residues 166 to 186 (SEEKKVEKPIITEKKEVKAES) are compositionally biased toward basic and acidic residues. The segment covering 197-208 (TDPTTAEETITT) has biased composition (low complexity). The segment covering 209 to 229 (QYQKLSGTTLTGQTIDLSQFN) has biased composition (polar residues). Residues 240–257 (ITPNKPGTPGVGNNNNAN) show a composition bias toward low complexity. Positions 343-352 (GKSKAAKYRR) are enriched in basic residues. The segment covering 353–371 (DKRETHRQKSDDEQRALDE) has biased composition (basic and acidic residues). The region spanning 454–622 (TRAPIVTVMG…KVLLEAEILD (169 aa)) is the tr-type G domain. The interval 463-470 (GHVDHGKT) is G1. 463-470 (GHVDHGKT) contributes to the GTP binding site. Residues 488–492 (GITQH) are G2. The G3 stretch occupies residues 510-513 (DTPG). GTP is bound by residues 510–514 (DTPGH) and 564–567 (NKVD). Positions 564 to 567 (NKVD) are G4. The G5 stretch occupies residues 600–602 (SAK).

The protein belongs to the TRAFAC class translation factor GTPase superfamily. Classic translation factor GTPase family. IF-2 subfamily.

It localises to the cytoplasm. In terms of biological role, one of the essential components for the initiation of protein synthesis. Protects formylmethionyl-tRNA from spontaneous hydrolysis and promotes its binding to the 30S ribosomal subunits. Also involved in the hydrolysis of GTP during the formation of the 70S ribosomal complex. In Flavobacterium johnsoniae (strain ATCC 17061 / DSM 2064 / JCM 8514 / BCRC 14874 / CCUG 350202 / NBRC 14942 / NCIMB 11054 / UW101) (Cytophaga johnsonae), this protein is Translation initiation factor IF-2.